Reading from the N-terminus, the 310-residue chain is Very-long-chain enoyl-CoA reductase (310 aa).

At 1–85 the chain is on the cytoplasmic side; the sequence is MPITIKSRSK…KDLGPQISWR (85 aa). Residues 86–106 form a helical membrane-spanning segment; sequence LVFFCEYLGPVLVHSLFYYLS. The Lumenal segment spans residues 107–141; the sequence is TIPTVVDRWHSASSDYNPFLNRVAYFLILGHYGKR. A helical membrane pass occupies residues 142-162; sequence LFETLFVHQFSLATMPIFNLF. Residues 163–165 are Cytoplasmic-facing; it reads KNC. The chain crosses the membrane as a helical span at residues 166 to 186; sequence FHYWVLSGLISFGYFGYGFPF. Residues 187–201 are Lumenal-facing; the sequence is GNAKLFKYYSYLKLD. A helical membrane pass occupies residues 202–222; the sequence is DLSTLIGLFVLSELWNFYCHI. Over 223–242 the chain is Cytoplasmic; that stretch reads KLRLWGDYQKKHGNAKIRVP. Residues 243 to 265 form a helical membrane-spanning segment; the sequence is LNQGIFNLFVAPNYTFEVWSWIW. At 266 to 268 the chain is on the lumenal side; it reads FTF. Residues 269–291 form a helical membrane-spanning segment; the sequence is VFKFNLFAVLFLTVSTAQMYAWA. Over 292-310 the chain is Cytoplasmic; it reads QKKNKKYHTRRAFLIPFVF.

This sequence belongs to the steroid 5-alpha reductase family. In terms of assembly, interacts with the fatty acid elongation system components ELO2 and ELO3. Interacts with NVJ1.

It localises to the endoplasmic reticulum membrane. It carries out the reaction a very-long-chain 2,3-saturated fatty acyl-CoA + NADP(+) = a very-long-chain (2E)-enoyl-CoA + NADPH + H(+). The catalysed reaction is octadecanoyl-CoA + NADP(+) = (2E)-octadecenoyl-CoA + NADPH + H(+). The enzyme catalyses (2E)-eicosenoyl-CoA + NADPH + H(+) = eicosanoyl-CoA + NADP(+). It catalyses the reaction (2E)-docosenoyl-CoA + NADPH + H(+) = docosanoyl-CoA + NADP(+). It carries out the reaction (2E)-tetracosenoyl-CoA + NADPH + H(+) = tetracosanoyl-CoA + NADP(+). The catalysed reaction is (2E)-hexacosenoyl-CoA + NADPH + H(+) = hexacosanoyl-CoA + NADP(+). Its pathway is lipid metabolism; fatty acid biosynthesis. In terms of biological role, catalyzes the last of the four reactions of the long-chain fatty acids elongation cycle. This endoplasmic reticulum-bound enzymatic process, allows the addition of 2 carbons to the chain of long- and very long-chain fatty acids/VLCFAs per cycle. This enzyme reduces the trans-2,3-enoyl-CoA fatty acid intermediate to an acyl-CoA that can be further elongated by entering a new cycle of elongation. Thereby, it participates in the production of VLCFAs of different chain lengths that are involved in multiple biological processes as precursors of membrane lipids and lipid mediators. VLCFAs serve for instance as precursors for ceramide and sphingolipids. Required for normal biogenesis of piecemeal microautophagy of the nucleus (PMN) bleps and vesicles during nutrient stress. This Saccharomyces cerevisiae (strain ATCC 204508 / S288c) (Baker's yeast) protein is Very-long-chain enoyl-CoA reductase (TSC13).